Here is a 384-residue protein sequence, read N- to C-terminus: S-adenosylmethionine synthase (384 aa).

ATP is bound at residue His-15. Asp-17 is a binding site for Mg(2+). Glu-43 serves as a coordination point for K(+). The L-methionine site is built by Glu-56 and Gln-99. The tract at residues 99 to 109 (QSPDINQGVDR) is flexible loop. ATP-binding positions include 164 to 166 (DAK), 230 to 231 (RF), Asp-239, 245 to 246 (RK), Ala-262, and Lys-266. L-methionine is bound at residue Asp-239. Lys-270 contributes to the L-methionine binding site.

Belongs to the AdoMet synthase family. As to quaternary structure, homotetramer; dimer of dimers. Mg(2+) serves as cofactor. It depends on K(+) as a cofactor.

The protein resides in the cytoplasm. It catalyses the reaction L-methionine + ATP + H2O = S-adenosyl-L-methionine + phosphate + diphosphate. It functions in the pathway amino-acid biosynthesis; S-adenosyl-L-methionine biosynthesis; S-adenosyl-L-methionine from L-methionine: step 1/1. Functionally, catalyzes the formation of S-adenosylmethionine (AdoMet) from methionine and ATP. The overall synthetic reaction is composed of two sequential steps, AdoMet formation and the subsequent tripolyphosphate hydrolysis which occurs prior to release of AdoMet from the enzyme. In Shigella boydii serotype 18 (strain CDC 3083-94 / BS512), this protein is S-adenosylmethionine synthase.